The sequence spans 81 residues: Probable antitoxin MazE2 (81 aa).

Forms a complex with cognate toxin MazF2.

In terms of biological role, antitoxin component of a type II toxin-antitoxin (TA) system. In Mycobacterium tuberculosis (strain ATCC 25618 / H37Rv), this protein is Probable antitoxin MazE2 (mazE2).